A 132-amino-acid chain; its full sequence is Small ribosomal subunit protein uS11 (132 aa).

Positions 1–21 (MAAPKSAVRKPRRKDKKNIAV) are disordered. Residues 7-16 (AVRKPRRKDK) show a composition bias toward basic residues.

This sequence belongs to the universal ribosomal protein uS11 family. As to quaternary structure, part of the 30S ribosomal subunit. Interacts with proteins S7 and S18. Binds to IF-3.

In terms of biological role, located on the platform of the 30S subunit, it bridges several disparate RNA helices of the 16S rRNA. Forms part of the Shine-Dalgarno cleft in the 70S ribosome. The polypeptide is Small ribosomal subunit protein uS11 (Clavibacter sepedonicus (Clavibacter michiganensis subsp. sepedonicus)).